A 315-amino-acid chain; its full sequence is Protoheme IX farnesyltransferase (315 aa).

The next 9 helical transmembrane spans lie at 34-54 (VISLVVFTGAAGLAMAPGPIN), 55-75 (PLIAAVSILCICMASGAAGAI), 105-125 (ALGFGIGLSVASVLLMWLAAN), 127-147 (LAAFILAFSIFFYAVIYTMWL), 155-175 (IVIGGAAGAFPPMIGWAATTG), 177-197 (LGVLPVVMFAIVFLWTPPHFW), 226-246 (WQILFYTLILSAVSLVPSFLH), 251-271 (LYTGVASLLDAGFVACAVGVL), and 294-314 (YSLAYLFLLFCGLLADHFLIM).

It belongs to the UbiA prenyltransferase family. Protoheme IX farnesyltransferase subfamily.

The protein localises to the cell inner membrane. It carries out the reaction heme b + (2E,6E)-farnesyl diphosphate + H2O = Fe(II)-heme o + diphosphate. It functions in the pathway porphyrin-containing compound metabolism; heme O biosynthesis; heme O from protoheme: step 1/1. Its function is as follows. Converts heme B (protoheme IX) to heme O by substitution of the vinyl group on carbon 2 of heme B porphyrin ring with a hydroxyethyl farnesyl side group. The sequence is that of Protoheme IX farnesyltransferase from Gluconacetobacter diazotrophicus (strain ATCC 49037 / DSM 5601 / CCUG 37298 / CIP 103539 / LMG 7603 / PAl5).